The chain runs to 141 residues: Large ribosomal subunit protein uL13 (141 aa).

This sequence belongs to the universal ribosomal protein uL13 family. Part of the 50S ribosomal subunit.

This protein is one of the early assembly proteins of the 50S ribosomal subunit, although it is not seen to bind rRNA by itself. It is important during the early stages of 50S assembly. This chain is Large ribosomal subunit protein uL13, found in Sulfurovum sp. (strain NBC37-1).